Consider the following 214-residue polypeptide: ATP-dependent Clp protease proteolytic subunit 2 (214 aa).

S110 functions as the Nucleophile in the catalytic mechanism. Residue H135 is part of the active site.

This sequence belongs to the peptidase S14 family. Fourteen ClpP subunits assemble into 2 heptameric rings which stack back to back to give a disk-like structure with a central cavity, resembling the structure of eukaryotic proteasomes.

Its subcellular location is the cytoplasm. The catalysed reaction is Hydrolysis of proteins to small peptides in the presence of ATP and magnesium. alpha-casein is the usual test substrate. In the absence of ATP, only oligopeptides shorter than five residues are hydrolyzed (such as succinyl-Leu-Tyr-|-NHMec, and Leu-Tyr-Leu-|-Tyr-Trp, in which cleavage of the -Tyr-|-Leu- and -Tyr-|-Trp bonds also occurs).. Functionally, cleaves peptides in various proteins in a process that requires ATP hydrolysis. Has a chymotrypsin-like activity. Plays a major role in the degradation of misfolded proteins. In Mycobacterium bovis (strain ATCC BAA-935 / AF2122/97), this protein is ATP-dependent Clp protease proteolytic subunit 2.